We begin with the raw amino-acid sequence, 428 residues long: 3-phosphoshikimate 1-carboxyvinyltransferase (428 aa).

3-phosphoshikimate contacts are provided by K23, S24, and R28. K23 is a phosphoenolpyruvate binding site. Phosphoenolpyruvate is bound by residues G97 and R125. S170, S171, Q172, S198, D314, N337, and K341 together coordinate 3-phosphoshikimate. Q172 lines the phosphoenolpyruvate pocket. Residue D314 is the Proton acceptor of the active site. The phosphoenolpyruvate site is built by R345, R387, and K412.

Belongs to the EPSP synthase family. In terms of assembly, monomer.

The protein localises to the cytoplasm. The catalysed reaction is 3-phosphoshikimate + phosphoenolpyruvate = 5-O-(1-carboxyvinyl)-3-phosphoshikimate + phosphate. It participates in metabolic intermediate biosynthesis; chorismate biosynthesis; chorismate from D-erythrose 4-phosphate and phosphoenolpyruvate: step 6/7. Its function is as follows. Catalyzes the transfer of the enolpyruvyl moiety of phosphoenolpyruvate (PEP) to the 5-hydroxyl of shikimate-3-phosphate (S3P) to produce enolpyruvyl shikimate-3-phosphate and inorganic phosphate. This Cronobacter sakazakii (strain ATCC BAA-894) (Enterobacter sakazakii) protein is 3-phosphoshikimate 1-carboxyvinyltransferase.